The chain runs to 199 residues: Early activation antigen CD69 (199 aa).

The tract at residues 1-29 is disordered; sequence MSSENCFVAENSSLHPESGQENDATSPHF. Residues 1–40 lie on the Cytoplasmic side of the membrane; sequence MSSENCFVAENSSLHPESGQENDATSPHFSTRHEGSFQVP. The chain crosses the membrane as a helical; Signal-anchor for type II membrane protein span at residues 41-61; sequence VLCAVMNVVFITILIIALIAL. Topologically, residues 62 to 199 are extracellular; it reads SVGQYNCPGQ…LYWICNKPYK (138 aa). Cystine bridges form between Cys-85–Cys-96, Cys-113–Cys-194, and Cys-173–Cys-186. The C-type lectin domain occupies 92–195; the sequence is YQRKCYFIST…CEKNLYWICN (104 aa). Asn-166 carries an N-linked (GlcNAc...) asparagine glycan.

In terms of assembly, homodimer; disulfide-linked. Interacts with S100A8 and S100A9. Interacts with galactin-1/LGALS1. Interacts with S1PR1; this interaction mediates S1PR1 degradation. Post-translationally, constitutive Ser/Thr phosphorylation in both mature thymocytes and activated T-lymphocytes. Expressed on the surface of activated T-cells, B-cells, natural killer cells, neutrophils, eosinophils, epidermal Langerhans cells and platelets.

It localises to the cell membrane. Its function is as follows. Transmembrane protein expressed mainly on T-cells resident in mucosa that plays an essential role in immune cell homeostasis. Rapidly expressed on the surface of platelets, T-lymphocytes and NK cells upon activation by various stimuli, such as antigen recognition or cytokine signaling, stimulates different signaling pathways in different cell types. Negatively regulates Th17 cell differentiation through its carbohydrate dependent interaction with galectin-1/LGALS1 present on immature dendritic cells. Association of CD69 cytoplasmic tail with the JAK3/STAT5 signaling pathway regulates the transcription of RORgamma/RORC and, consequently, differentiation toward the Th17 lineage. Also acts via the S100A8/S100A9 complex present on peripheral blood mononuclear cells to promote the conversion of naive CD4 T-cells into regulatory T-cells. Acts as an oxidized low-density lipoprotein (oxLDL) receptor in CD4 T-lymphocytes and negatively regulates the inflammatory response by inducing the expression of PDCD1 through the activation of NFAT. Participates in adipose tissue-derived mesenchymal stem cells (ASCs)-mediated protection against P.aeruginosa infection. Mechanistically, specifically recognizes P.aeruginosa to promote ERK1 activation, followed by granulocyte-macrophage colony-stimulating factor (GM-CSF) and other inflammatory cytokines secretion. In eosinophils, induces IL-10 production through the ERK1/2 pathway. Negatively regulates the chemotactic responses of effector lymphocytes and dendritic cells (DCs) to sphingosine 1 phosphate/S1P by acting as a S1PR1 receptor agonist and facilitating the internalization and degradation of the receptor. The sequence is that of Early activation antigen CD69 (CD69) from Homo sapiens (Human).